Reading from the N-terminus, the 516-residue chain is Protein indeterminate-domain 4, chloroplastic (516 aa).

Positions 1-26 are enriched in low complexity; sequence MSSSSYNTSVIPSSSSSAQPFFITSS. Residues 1–68 are disordered; the sequence is MSSSSYNTSV…QPGNPNPDAE (68 aa). The N-terminal 70 residues, 1–70, are a transit peptide targeting the chloroplast; sequence MSSSSYNTSV…GNPNPDAEVV (70 aa). At Ser-73 the chain carries Phosphoserine. 2 C2H2-type zinc fingers span residues 83–105 and 124–154; these read FICD…RRGH and YLCP…YRKH. The Nuclear localization signal signature appears at 146–153; that stretch reads IKKHYYRK. The segment at 159 to 182 adopts a C2H2-type 2; degenerate zinc-finger fold; it reads WKCEKCSKRYAVQSDWKAHSKTCG. Zn(2+) contacts are provided by Cys-161, Cys-164, His-177, Cys-181, Cys-188, Cys-190, His-203, and Cys-207. Residues 186–209 form a CCHC-type 2; atypical zinc finger; that stretch reads YRCDCGTIFSRRDSYITHRAFCDA. The tract at residues 196–208 is SHR-binding; it reads RRDSYITHRAFCD. The disordered stretch occupies residues 483-516; that stretch reads NRGGGGGGRGSARGGVSLDGEAKFPEQNYPFGRG. Gly residues predominate over residues 484–495; the sequence is RGGGGGGRGSAR.

In terms of assembly, binds to RGA and SCL3 competitively in the nucleus.

It is found in the plastid. The protein localises to the chloroplast. Its subcellular location is the nucleus. In terms of biological role, transcription factor that may act a transcriptional activator of nuclear-encoded photosynthetic gene expression. Binds DNA via its zinc fingers. Recognizes and binds to SCL3 promoter sequence 5'-AGACAA-3' to promote its expression when in complex with RGA. The chain is Protein indeterminate-domain 4, chloroplastic from Arabidopsis thaliana (Mouse-ear cress).